The primary structure comprises 430 residues: Bystin (430 aa).

Composition is skewed to basic residues over residues 1–12 and 26–35; these read MGKDKKDRKHKG and PSKRVKHRRE. 2 disordered regions span residues 1-45 and 65-113; these read MGKD…ESFV and MEEY…SETY. Basic and acidic residues predominate over residues 68–78; the sequence is YGFRKTGDRKT. The segment covering 93–104 has biased composition (acidic residues); it reads RIDDDDEDDSDD.

The protein belongs to the bystin family.

The protein resides in the nucleus. The protein localises to the nucleolus. In terms of biological role, required for processing of 20S pre-rRNA precursor and biogenesis of 40S ribosomal subunits. In Nematostella vectensis (Starlet sea anemone), this protein is Bystin (bysl).